The primary structure comprises 731 residues: MAAPDGRVVSRPQRLGQGSGQGPKGSGACLHPLDSLEQKETQEQTSGQLVMLRKAQEFFQTCDAEGKGFIARKDMQRLHKELPLSLEELEDVFDALDADGNGYLTPQEFTTGFSHFFFSQNNPSQEDAGEQVAQRHEEKVYLSRGDEDLGDMGEDEEAQFRMLMDRLGAQKVLEDESDVKQLWLQLKKEEPHLLSNFEDFLTRIISQLQEAHEEKNELECALKRKIAAYDEEIQHLYEEMEQQIKSEKEQFLLKDTERFQARSQELEQKLLCKEQELEQLTQKQKRLEGQCTALHHDKHETKAENTKLKLTNQELARELERTSWELQDAQQQLESLQQEACKLHQEKEMEVYRVTESLQREKAGLLKQLDFLRERNKHLRDERDICFQKNKAAKANTAASRASWKKRSGSVIGKYVDSRGILRSQSEEEEEVFGIPRRSSLGLSGYPLTEEEPGTGEPGPGGPYPRPLRRIISVEEDPLPQLLDGGFEQPLSKCSEEEEVSDQGVQGQIPEAPPLKLTPTSPRGQPVGKEALCKEESSPSAPDRLFKIVFVGNSAVGKTSFLRRFCEDRFSPGMAATVGIDYRVKTLNVDNSQVALQLWDTAGQERYRCITQQFFRKADGVIVMYDLTDKQSFLSVRRWLSSVEEAVGDRVPVLLLGNKLDNEKEREVPRGLGEQLATENNLIFYECSAYSGHNTKESLLHLARFLKEQEDTVREDTIQVGHPAKKKSCCG.

The disordered stretch occupies residues 1 to 45 (MAAPDGRVVSRPQRLGQGSGQGPKGSGACLHPLDSLEQKETQEQT). The region spanning 84-119 (LSLEELEDVFDALDADGNGYLTPQEFTTGFSHFFFS) is the EF-hand domain. The Ca(2+) site is built by aspartate 97, aspartate 99, asparagine 101, tyrosine 103, and glutamate 108. Residues 201–382 (LTRIISQLQE…RERNKHLRDE (182 aa)) are a coiled coil. Residues 349–540 (MEVYRVTESL…ALCKEESSPS (192 aa)) are proline-rich domain (PRD) which mediates interaction with VAV1. Disordered stretches follow at residues 426 to 466 (SEEE…PYPR) and 494 to 528 (CSEEEEVSDQGVQGQIPEAPPLKLTPTSPRGQPVG). Serine 554, valine 556, glycine 557, lysine 558, threonine 559, serine 560, serine 571, proline 572, and threonine 577 together coordinate GTP. Position 559 (threonine 559) interacts with Mg(2+). Residues 572 to 580 (PGMAATVGI) are switch-I. Positions 577 and 600 each coordinate Mg(2+). The GTP site is built by glycine 603, asparagine 658, lysine 659, aspartate 661, and alanine 689. The switch-II stretch occupies residues 603–619 (GQERYRCITQQFFRKAD). Cysteine 729 is lipidated: S-geranylgeranyl cysteine.

The protein belongs to the EFCAB4 family. As to quaternary structure, interacts with ORAI1 and STIM1; the interaction is direct and takes place in absence of Ca(2+). Forms a complex with ORAI1 and STIM1 at low concentration of Ca(2+), the complex dissociates at elevated Ca(2+) concentrations. Interacts with ORAI2 and ORAI3. In terms of assembly, interacts with DYNC1H1. Interacts with the dynein-dynactin complex in a Ca(2+)-dependent manner. Interacts with VAV1. Mg(2+) is required as a cofactor. Expressed in the Jurkat T-cell line. As to expression, expressed in endothelial cells. Expressed in Weibel-Palade bodies (which are P-selectin/SELP negative) in endothelial cells. Expressed in the Jurkat T-cell line.

It is found in the cytoplasm. It localises to the cytoskeleton. The protein resides in the microtubule organizing center. The protein localises to the cell membrane. Its subcellular location is the golgi apparatus membrane. It is found in the golgi apparatus. It localises to the trans-Golgi network membrane. The protein resides in the vesicle. It catalyses the reaction GTP + H2O = GDP + phosphate + H(+). In terms of biological role, ca(2+)-binding protein that plays a key role in store-operated Ca(2+) entry (SOCE) in T-cells by regulating CRAC channel activation. Acts as a cytoplasmic calcium-sensor that facilitates the clustering of ORAI1 and STIM1 at the junctional regions between the plasma membrane and the endoplasmic reticulum upon low Ca(2+) concentration. It thereby regulates CRAC channel activation, including translocation and clustering of ORAI1 and STIM1. Upon increase of cytoplasmic Ca(2+) resulting from opening of CRAC channels, dissociates from ORAI1 and STIM1, thereby destabilizing the ORAI1-STIM1 complex. Rab GTPase that mediates the trafficking of Weibel-Palade bodies (WPBs) to microtubule organizing center (MTOC) in endothelial cells in response to acute inflammatory stimuli. During histamine (but not thrombin) stimulation of endothelial cells, the dynein-bound form induces retrograde transport of a subset of WPBs along microtubules to the MTOC in a Ca(2+)-independent manner and its GTPase activity is essential for this function. Ca(2+)-regulated dynein adapter protein that activates dynein-mediated transport and dynein-dynactin motility on microtubules and regulates endosomal trafficking of CD47. Acts as an intracellular signaling module bridging two important T-cell receptor (TCR) signaling pathways, Ca(2+)-NFAT and JNK, to affect T-cell activation. In resting T-cells, is predominantly localized near TGN network in a GTP-bound form, upon TCR stimulation, localizes at the immunological synapse via interaction with VAV1 to activate downstream Ca(2+)-NFAT and JNK signaling pathways. Plays a role in T-helper 1 (Th1) cell differentiation and T-helper 17 (Th17) cell effector function. Plays a role in store-operated Ca(2+) entry (SOCE) in T-cells by regulating CRAC channel activation. This Homo sapiens (Human) protein is EF-hand calcium-binding domain-containing protein 4B.